Reading from the N-terminus, the 294-residue chain is Glycine--tRNA ligase alpha subunit (294 aa).

The protein belongs to the class-II aminoacyl-tRNA synthetase family. As to quaternary structure, tetramer of two alpha and two beta subunits.

It localises to the cytoplasm. It catalyses the reaction tRNA(Gly) + glycine + ATP = glycyl-tRNA(Gly) + AMP + diphosphate. The polypeptide is Glycine--tRNA ligase alpha subunit (Natranaerobius thermophilus (strain ATCC BAA-1301 / DSM 18059 / JW/NM-WN-LF)).